The following is a 221-amino-acid chain: GFP-like non-fluorescent chromoprotein (221 aa).

Residues 62–64 (QYG) constitute a cross-link (2-iminomethyl-5-imidazolinone (Gln-Gly)). Tyr-63 is modified ((E)-2,3-didehydrotyrosine).

Belongs to the GFP family. In terms of assembly, homotetramer. Contains a chromophore consisting of modified amino acid residues. The chromophore is formed by autocatalytic backbone condensation between Xaa-N and Gly-(N+2), oxidation of Tyr-(N+1) to didehydrotyrosine, and formation of a double bond to the alpha-amino nitrogen of residue Xaa-N. Maturation of the chromophore requires nothing other than molecular oxygen.

Its function is as follows. Thought to play a role in photoprotection of the coral's resident symbiont microalgae's photosystems from photoinhibition caused by high light levels found near the surface of coral reefs. This is GFP-like non-fluorescent chromoprotein from Montipora efflorescens (Pore coral).